The sequence spans 1521 residues: Lysophospholipase NTE1 (1521 aa).

Topologically, residues 1 to 50 (MDVVNSTARAAVTSATAVTAVTGTGDRHPNPLSSAVAAASDVANAHGSSS) are cytoplasmic. A helical transmembrane segment spans residues 51-71 (WLGLFARVVLWLLQFVSMVLY). Residues 72 to 96 (YAIKLATISVPTLLYTLFSTSLTVT) lie on the Lumenal side of the membrane. A helical transmembrane segment spans residues 97–117 (MNATTLMLIVAAMIGAISWVV). At 118–1521 (RYRYLNMYSR…RTMAPRRASI (1404 aa)) the chain is on the cytoplasmic side. 3 disordered regions span residues 280–301 (HADEDNSEPGTTTHSGLFPNYP), 315–372 (SVPN…SAHP), and 738–768 (HAMDSAQSIRSPQRSPQPFAESMRSGNKVDD). Polar residues-rich tracts occupy residues 316 to 334 (VPNTPQMDASASSSANNLP) and 738 to 753 (HAMDSAQSIRSPQRSP). A nucleoside 3',5'-cyclic phosphate-binding positions include 670 to 789 (PASP…GGLA) and 837 to 957 (RLTN…IASR). Positions 1217-1381 (LVLGGGGARG…VDNLTVSHMK (165 aa)) constitute a PNPLA domain. A GXGXXG motif is present at residues 1221–1226 (GGGARG). A GXSXG motif is present at residues 1248–1252 (GTSIG). Ser1250 (nucleophile) is an active-site residue. Asp1368 functions as the Proton acceptor in the catalytic mechanism. The DGA/G motif lies at 1368-1370 (DGG).

Belongs to the NTE family.

Its subcellular location is the endoplasmic reticulum membrane. It carries out the reaction a 1-acyl-sn-glycero-3-phosphocholine + H2O = sn-glycerol 3-phosphocholine + a fatty acid + H(+). With respect to regulation, inhibited by organophosphorus esters. Its function is as follows. Intracellular phospholipase B that catalyzes the double deacylation of phosphatidylcholine (PC) to glycerophosphocholine (GroPCho). Plays an important role in membrane lipid homeostasis. Responsible for the rapid PC turnover in response to inositol, elevated temperatures, or when choline is present in the growth medium. The polypeptide is Lysophospholipase NTE1 (NTE1) (Chaetomium globosum (strain ATCC 6205 / CBS 148.51 / DSM 1962 / NBRC 6347 / NRRL 1970) (Soil fungus)).